The primary structure comprises 56 residues: Conotoxin Cal6.41b (56 aa).

A signal peptide spans 1 to 23 (MSGSGAMLLGLLILVAMATSLDT). Cystine bridges form between Cys-27/Cys-41, Cys-33/Cys-50, and Cys-40/Cys-54.

As to expression, expressed by the venom duct.

Its subcellular location is the secreted. Functionally, probable neurotoxin. The chain is Conotoxin Cal6.41b from Californiconus californicus (California cone).